Here is a 434-residue protein sequence, read N- to C-terminus: Serine hydroxymethyltransferase (434 aa).

Residues leucine 133 and glycine 137–leucine 139 each bind (6S)-5,6,7,8-tetrahydrofolate. Residue lysine 242 is modified to N6-(pyridoxal phosphate)lysine.

It belongs to the SHMT family. Homodimer. The cofactor is pyridoxal 5'-phosphate.

Its subcellular location is the cytoplasm. The catalysed reaction is (6R)-5,10-methylene-5,6,7,8-tetrahydrofolate + glycine + H2O = (6S)-5,6,7,8-tetrahydrofolate + L-serine. It functions in the pathway one-carbon metabolism; tetrahydrofolate interconversion. Its pathway is amino-acid biosynthesis; glycine biosynthesis; glycine from L-serine: step 1/1. In terms of biological role, catalyzes the reversible interconversion of serine and glycine with tetrahydrofolate (THF) serving as the one-carbon carrier. This reaction serves as the major source of one-carbon groups required for the biosynthesis of purines, thymidylate, methionine, and other important biomolecules. Also exhibits THF-independent aldolase activity toward beta-hydroxyamino acids, producing glycine and aldehydes, via a retro-aldol mechanism. This is Serine hydroxymethyltransferase from Bradyrhizobium sp. (strain BTAi1 / ATCC BAA-1182).